The chain runs to 428 residues: Aspartate--tRNA(Asp) ligase (428 aa).

Residue E166 participates in L-aspartate binding. Residues 188-191 (QLYK) form an aspartate region. Residue R210 participates in L-aspartate binding. Residues 210-212 (RAE), 218-220 (RHL), and E351 contribute to the ATP site. The Mg(2+) site is built by E351 and S354. The L-aspartate site is built by S354 and R358. 399-402 (GLER) provides a ligand contact to ATP.

Belongs to the class-II aminoacyl-tRNA synthetase family. Type 2 subfamily. Homodimer. The cofactor is Mg(2+).

The protein resides in the cytoplasm. The catalysed reaction is tRNA(Asp) + L-aspartate + ATP = L-aspartyl-tRNA(Asp) + AMP + diphosphate. Catalyzes the attachment of L-aspartate to tRNA(Asp) in a two-step reaction: L-aspartate is first activated by ATP to form Asp-AMP and then transferred to the acceptor end of tRNA(Asp). This chain is Aspartate--tRNA(Asp) ligase, found in Thermoplasma volcanium (strain ATCC 51530 / DSM 4299 / JCM 9571 / NBRC 15438 / GSS1).